Consider the following 309-residue polypeptide: MDLARAELGEMLLYHHESVLTEAVVAYLQPQQGGAFLDVTLGGGGHSLALLQRGADRVVGLDRDPTALQAAQARLAAAGIPGNRLQLWHLNFADFDLQRHGFRDERGQGIPFDGIVADLGVSSPQLDCPERGFSFRAEGPLDMRMDPTADQETAADWVNRRPVEDLIDIFVRYGEERFARRIAHHIERSRPLFTTTQLAHVVWQAVPPAARRGRIHPATRIFQALRIAVNRELEALETLLAQAPNWLKPGGRLAVISFHSLEDRLVKWAFRTDPRWQVLTPKPLCPSELEQQRNSRARSAKLRVAARSS.

Residues 44 to 46, D62, F102, D118, and Q125 contribute to the S-adenosyl-L-methionine site; that span reads GGH. A disordered region spans residues 289–309; it reads LEQQRNSRARSAKLRVAARSS.

It belongs to the methyltransferase superfamily. RsmH family.

Its subcellular location is the cytoplasm. It carries out the reaction cytidine(1402) in 16S rRNA + S-adenosyl-L-methionine = N(4)-methylcytidine(1402) in 16S rRNA + S-adenosyl-L-homocysteine + H(+). In terms of biological role, specifically methylates the N4 position of cytidine in position 1402 (C1402) of 16S rRNA. This chain is Ribosomal RNA small subunit methyltransferase H, found in Synechococcus sp. (strain JA-3-3Ab) (Cyanobacteria bacterium Yellowstone A-Prime).